The following is a 403-amino-acid chain: Poly(rC)-binding protein 4 (403 aa).

3 consecutive KH domains span residues 17-67, 101-154, and 241-293; these read TLTL…TITG, PVTL…TVSG, and TSSQ…TITG.

As to expression, widely expressed, with highest levels in testis and lowest in heart.

The protein localises to the cytoplasm. Functionally, single-stranded nucleic acid binding protein that binds preferentially to oligo dC. The polypeptide is Poly(rC)-binding protein 4 (Pcbp4) (Mus musculus (Mouse)).